Here is a 131-residue protein sequence, read N- to C-terminus: D-ribose pyranase (131 aa).

Histidine 20 serves as the catalytic Proton donor. Residues aspartate 28, histidine 98, and tyrosine 120–asparagine 122 each bind substrate.

This sequence belongs to the RbsD / FucU family. RbsD subfamily. In terms of assembly, homodecamer.

Its subcellular location is the cytoplasm. The enzyme catalyses beta-D-ribopyranose = beta-D-ribofuranose. It participates in carbohydrate metabolism; D-ribose degradation; D-ribose 5-phosphate from beta-D-ribopyranose: step 1/2. In terms of biological role, catalyzes the interconversion of beta-pyran and beta-furan forms of D-ribose. This chain is D-ribose pyranase, found in Bacillus mycoides (strain KBAB4) (Bacillus weihenstephanensis).